Reading from the N-terminus, the 412-residue chain is DNA utilization protein HofQ (412 aa).

The first 18 residues, 1–18, serve as a signal peptide directing secretion; the sequence is MKQWIAALLLMLIPGVQA.

It belongs to the bacterial secretin family. PilQ subfamily.

It is found in the cell outer membrane. Functionally, required for the use of extracellular DNA as a nutrient. Could be the porin responsible for transport of DNA across the outer membrane. This is DNA utilization protein HofQ (hofQ) from Escherichia coli (strain K12).